A 204-amino-acid chain; its full sequence is 3-isopropylmalate dehydratase small subunit (204 aa).

This sequence belongs to the LeuD family. LeuD type 1 subfamily. Heterodimer of LeuC and LeuD.

The enzyme catalyses (2R,3S)-3-isopropylmalate = (2S)-2-isopropylmalate. It participates in amino-acid biosynthesis; L-leucine biosynthesis; L-leucine from 3-methyl-2-oxobutanoate: step 2/4. In terms of biological role, catalyzes the isomerization between 2-isopropylmalate and 3-isopropylmalate, via the formation of 2-isopropylmaleate. This is 3-isopropylmalate dehydratase small subunit from Ruthia magnifica subsp. Calyptogena magnifica.